The primary structure comprises 145 residues: Basic phospholipase A2 PC16 (145 aa).

The first 21 residues, 1 to 21, serve as a signal peptide directing secretion; sequence MYPAHLLLLLAVCVSLLGASA. The propeptide occupies 22 to 27; the sequence is IPPLPL. Cystine bridges form between Cys-38–Cys-98, Cys-54–Cys-144, Cys-56–Cys-72, Cys-71–Cys-125, Cys-78–Cys-118, Cys-87–Cys-111, and Cys-105–Cys-116. Ca(2+) contacts are provided by Tyr-55, Gly-57, and Gly-59. The active site involves His-75. Residue Asp-76 participates in Ca(2+) binding. Asp-119 is an active-site residue.

This sequence belongs to the phospholipase A2 family. Group I subfamily. D49 sub-subfamily. Ca(2+) is required as a cofactor.

Its subcellular location is the secreted. The enzyme catalyses a 1,2-diacyl-sn-glycero-3-phosphocholine + H2O = a 1-acyl-sn-glycero-3-phosphocholine + a fatty acid + H(+). Functionally, PLA2 catalyzes the calcium-dependent hydrolysis of the 2-acyl groups in 3-sn-phosphoglycerides. The polypeptide is Basic phospholipase A2 PC16 (Laticauda laticaudata (Blue-ringed sea krait)).